The primary structure comprises 223 residues: Ribonuclease 3 (223 aa).

One can recognise an RNase III domain in the interval 4–127; sequence LEEFERNLGY…VMGAIYLEAG (124 aa). Glu-40 serves as a coordination point for Mg(2+). Residue Asp-44 is part of the active site. Residues Asp-113 and Glu-116 each contribute to the Mg(2+) site. Glu-116 is an active-site residue. A DRBM domain is found at 154-223; the sequence is DYKTALQEVT…AKIALEKIKK (70 aa).

Belongs to the ribonuclease III family. As to quaternary structure, homodimer. It depends on Mg(2+) as a cofactor.

The protein resides in the cytoplasm. The enzyme catalyses Endonucleolytic cleavage to 5'-phosphomonoester.. In terms of biological role, digests double-stranded RNA. Involved in the processing of primary rRNA transcript to yield the immediate precursors to the large and small rRNAs (23S and 16S). Processes some mRNAs, and tRNAs when they are encoded in the rRNA operon. Processes pre-crRNA and tracrRNA of type II CRISPR loci if present in the organism. The protein is Ribonuclease 3 of Campylobacter concisus (strain 13826).